The primary structure comprises 488 residues: ATP synthase subunit beta (488 aa).

ATP is bound at residue 164–171 (GGAGVGKT).

It belongs to the ATPase alpha/beta chains family. As to quaternary structure, F-type ATPases have 2 components, CF(1) - the catalytic core - and CF(0) - the membrane proton channel. CF(1) has five subunits: alpha(3), beta(3), gamma(1), delta(1), epsilon(1). CF(0) has four main subunits: a(1), b(1), b'(1) and c(9-12).

The protein localises to the cellular thylakoid membrane. It catalyses the reaction ATP + H2O + 4 H(+)(in) = ADP + phosphate + 5 H(+)(out). Its function is as follows. Produces ATP from ADP in the presence of a proton gradient across the membrane. The catalytic sites are hosted primarily by the beta subunits. This is ATP synthase subunit beta from Prochlorococcus marinus (strain MIT 9313).